Consider the following 407-residue polypeptide: Cation efflux system protein CusB (407 aa).

The N-terminal stretch at 1-28 (MKKIALIIGSMIAGGIISAAGFTWFAKA) is a signal peptide.

This sequence belongs to the membrane fusion protein (MFP) (TC 8.A.1) family. The cus efflux system is composed of CusA, CusB, CusC and CusF.

Part of a cation efflux system that mediates resistance to copper and silver. This Escherichia coli O157:H7 protein is Cation efflux system protein CusB (cusB).